A 77-amino-acid polypeptide reads, in one-letter code: Tachyplesin-1 (77 aa).

Positions 1–23 (MKKLVIALCLMMVLAVMVEEAEA) are cleaved as a signal peptide. 2 disulfides stabilise this stretch: cysteine 26–cysteine 39 and cysteine 30–cysteine 35. An Arginine amide modification is found at arginine 40. Residues 41–77 (GKRNEVRQYRDRGYDVRAIPEETFFTRQDEDEDDDEE) constitute a propeptide that is removed on maturation.

This sequence belongs to the tachyplesin/polyphemusin family. Hemocytes.

The protein resides in the secreted. Functionally, significantly inhibits the growth of Gram-negative and Gram-positive bacteria. In Tachypleus tridentatus (Japanese horseshoe crab), this protein is Tachyplesin-1.